The following is a 471-amino-acid chain: Glutamate--tRNA ligase (471 aa).

The short motif at 9 to 19 is the 'HIGH' region element; that stretch reads PSPTGYLHVGG. Positions 98, 100, 125, and 127 each coordinate Zn(2+). The 'KMSKS' region signature appears at 237-241; that stretch reads KLSKR. Residue K240 participates in ATP binding.

It belongs to the class-I aminoacyl-tRNA synthetase family. Glutamate--tRNA ligase type 1 subfamily. In terms of assembly, monomer. Zn(2+) serves as cofactor.

It localises to the cytoplasm. The enzyme catalyses tRNA(Glu) + L-glutamate + ATP = L-glutamyl-tRNA(Glu) + AMP + diphosphate. In terms of biological role, catalyzes the attachment of glutamate to tRNA(Glu) in a two-step reaction: glutamate is first activated by ATP to form Glu-AMP and then transferred to the acceptor end of tRNA(Glu). This Citrobacter koseri (strain ATCC BAA-895 / CDC 4225-83 / SGSC4696) protein is Glutamate--tRNA ligase.